Here is a 295-residue protein sequence, read N- to C-terminus: CBY1-interacting BAR domain-containing protein 1 (295 aa).

Residues 1-49 (MMSRTPDARARDTQTKQIQENITSVEKHFGDLCQLFAAYVRKTARLRDK) constitute a mitochondrion transit peptide. The tract at residues 12 to 222 (DTQTKQIQEN…NVDEEGDLEV (211 aa)) is BAR-like. A coiled-coil region spans residues 111–185 (KREDLKQTQS…KQKIRDIKKV (75 aa)). Positions 243 to 265 (SKLSLNRTGTSMSKSGTMQSRTS) are enriched in polar residues. The tract at residues 243–295 (SKLSLNRTGTSMSKSGTMQSRTSSRQRKRDDEEDEEEDDEDEDDLEEVTDDEH) is disordered. The span at 273–295 (DEEDEEEDDEDEDDLEEVTDDEH) shows a compositional bias: acidic residues.

The protein belongs to the CIBAR family.

It localises to the cytoplasm. Its subcellular location is the cytoskeleton. The protein resides in the microtubule organizing center. The protein localises to the centrosome. It is found in the centriole. It localises to the cell projection. Its subcellular location is the cilium. The protein resides in the nucleus. The protein localises to the mitochondrion inner membrane. It is found in the flagellum. Plays a critical role in regulating mitochondrial ultrastructure and function by maintaining the integrity of mitochondrial morphology, particularly the organization of cristae. Plays a crucial role in ciliogenesis. Plays a key role in the correct positioning of the annulus, a septin-based ring structure in the sperm flagellum, serving both as a physical barrier and a membrane diffusion barrier that separates the midpiece (MP) from the principal piece (PP). In Danio rerio (Zebrafish), this protein is CBY1-interacting BAR domain-containing protein 1 (cibar1).